The sequence spans 609 residues: Grainyhead-like protein 1 homolog (609 aa).

Positions methionine 1–serine 91 are transcription activation. The segment at serine 183 to threonine 207 is disordered. Residues histidine 185–glutamate 206 show a composition bias toward polar residues. The 227-residue stretch at alanine 239–isoleucine 465 folds into the Grh/CP2 DB domain. Interaction with DNA stretches follow at residues threonine 371–lysine 380 and arginine 418–arginine 421.

This sequence belongs to the grh/CP2 family. Grainyhead subfamily. Binds DNA as homodimer.

Its subcellular location is the nucleus. Transcription factor involved in epithelial development. Binds directly to the consensus DNA sequence 5'-AACCGGTT-3' and modulates expression of epidermal-specific genes, including XK81A1. Important regulator of DSG1 in the context of epidermal differentiation. Regulates the maintenance of skin barrier. No genetic interaction with GRHL3, nor functional cooperativity due to diverse target gene selectivity during epithelia development. Functions downstream of BMP-signaling cascade modulating endogenous bmp4-responsive targets. The sequence is that of Grainyhead-like protein 1 homolog from Xenopus laevis (African clawed frog).